The following is a 203-amino-acid chain: N-(5'-phosphoribosyl)anthranilate isomerase (203 aa).

It belongs to the TrpF family.

It carries out the reaction N-(5-phospho-beta-D-ribosyl)anthranilate = 1-(2-carboxyphenylamino)-1-deoxy-D-ribulose 5-phosphate. Its pathway is amino-acid biosynthesis; L-tryptophan biosynthesis; L-tryptophan from chorismate: step 3/5. This chain is N-(5'-phosphoribosyl)anthranilate isomerase, found in Sulfurihydrogenibium sp. (strain YO3AOP1).